A 366-amino-acid polypeptide reads, in one-letter code: Chorismate synthase (366 aa).

Arginine 48 and arginine 54 together coordinate NADP(+). Residues 125–127 (RSS), 238–239 (NA), glycine 278, 293–297 (KPTSS), and arginine 319 contribute to the FMN site.

The protein belongs to the chorismate synthase family. In terms of assembly, homotetramer. Requires FMNH2 as cofactor.

The enzyme catalyses 5-O-(1-carboxyvinyl)-3-phosphoshikimate = chorismate + phosphate. It functions in the pathway metabolic intermediate biosynthesis; chorismate biosynthesis; chorismate from D-erythrose 4-phosphate and phosphoenolpyruvate: step 7/7. Its function is as follows. Catalyzes the anti-1,4-elimination of the C-3 phosphate and the C-6 proR hydrogen from 5-enolpyruvylshikimate-3-phosphate (EPSP) to yield chorismate, which is the branch point compound that serves as the starting substrate for the three terminal pathways of aromatic amino acid biosynthesis. This reaction introduces a second double bond into the aromatic ring system. The chain is Chorismate synthase from Paraburkholderia xenovorans (strain LB400).